A 77-amino-acid chain; its full sequence is Defensin-like protein (77 aa).

Positions 1 to 30 are cleaved as a signal peptide; that stretch reads MERGMRLFSSLVLVLLLVTATEMGPKVAEA. 4 cysteine pairs are disulfide-bonded: Cys-33–Cys-77, Cys-44–Cys-64, Cys-50–Cys-71, and Cys-54–Cys-73.

It belongs to the DEFL family.

Its subcellular location is the secreted. In Nelumbo nucifera (Sacred lotus), this protein is Defensin-like protein.